The sequence spans 260 residues: Large ribosomal subunit protein uL4 (260 aa).

This sequence belongs to the universal ribosomal protein uL4 family. As to quaternary structure, part of the 50S ribosomal subunit.

One of the primary rRNA binding proteins, this protein initially binds near the 5'-end of the 23S rRNA. It is important during the early stages of 50S assembly. It makes multiple contacts with different domains of the 23S rRNA in the assembled 50S subunit and ribosome. Its function is as follows. Forms part of the polypeptide exit tunnel. This is Large ribosomal subunit protein uL4 from Methanopyrus kandleri (strain AV19 / DSM 6324 / JCM 9639 / NBRC 100938).